The following is a 689-amino-acid chain: Translation initiation factor IF-2 (689 aa).

The segment at 70–107 (VRSKKNSNKKKKKGKGNQDKRQENFAGKQQAQTVETPD) is disordered. Residues 71-84 (RSKKNSNKKKKKGK) are compositionally biased toward basic residues. The region spanning 191–360 (ERPAVVTIMG…LLVSEVEEYK (170 aa)) is the tr-type G domain. The segment at 200–207 (GHVDHGKT) is G1. GTP is bound at residue 200 to 207 (GHVDHGKT). The tract at residues 225–229 (GITQH) is G2. Residues 246-249 (DTPG) form a G3 region. Residues 246–250 (DTPGH) and 300–303 (NKMD) contribute to the GTP site. The interval 300–303 (NKMD) is G4. A G5 region spans residues 336-338 (SAI).

It belongs to the TRAFAC class translation factor GTPase superfamily. Classic translation factor GTPase family. IF-2 subfamily.

Its subcellular location is the cytoplasm. Functionally, one of the essential components for the initiation of protein synthesis. Protects formylmethionyl-tRNA from spontaneous hydrolysis and promotes its binding to the 30S ribosomal subunits. Also involved in the hydrolysis of GTP during the formation of the 70S ribosomal complex. The protein is Translation initiation factor IF-2 of Bacillus cytotoxicus (strain DSM 22905 / CIP 110041 / 391-98 / NVH 391-98).